The following is a 512-amino-acid chain: Cytochrome P450 26B1 (512 aa).

Cys-441 provides a ligand contact to heme.

It belongs to the cytochrome P450 family. Heme is required as a cofactor.

It is found in the endoplasmic reticulum membrane. The protein localises to the microsome membrane. The catalysed reaction is all-trans-retinoate + reduced [NADPH--hemoprotein reductase] + O2 = all-trans-4-hydroxyretinoate + oxidized [NADPH--hemoprotein reductase] + H2O + H(+). It carries out the reaction all-trans-retinoate + reduced [NADPH--hemoprotein reductase] + O2 = all-trans-18-hydroxyretinoate + oxidized [NADPH--hemoprotein reductase] + H2O + H(+). Its function is as follows. A cytochrome P450 monooxygenase involved in the metabolism of retinoates (RAs), the active metabolites of vitamin A, and critical signaling molecules in animals. RAs exist as at least four different isomers: all-trans-RA (atRA), 9-cis-RA, 13-cis-RA, and 9,13-dicis-RA, where atRA is considered to be the biologically active isomer, although 9-cis-RA and 13-cis-RA also have activity. Catalyzes the hydroxylation of atRA primarily at C-4 and C-18, thereby contributing to the regulation of atRA homeostasis and signaling. Hydroxylation of atRA limits its biological activity and initiates a degradative process leading to its eventual elimination. Involved in the convertion of atRA to all-trans-4-oxo-RA. Can oxidize all-trans-13,14-dihydroretinoate (DRA) to metabolites which could include all-trans-4-oxo-DRA, all-trans-4-hydroxy-DRA, all-trans-5,8-epoxy-DRA, and all-trans-18-hydroxy-DRA. Shows preference for the following substrates: atRA &gt; 9-cis-RA &gt; 13-cis-RA. Plays a central role in germ cell development: acts by degrading RAs in the developing testis, preventing STRA8 expression, thereby leading to delay of meiosis. Required for the maintenance of the undifferentiated state of male germ cells during embryonic development in Sertoli cells, inducing arrest in G0 phase of the cell cycle and preventing meiotic entry. Plays a role in skeletal development, both at the level of patterning and in the ossification of bone and the establishment of some synovial joints. Essential for postnatal survival. Functionally, also has a significant activity in oxidation of tazarotenic acid and may therefore metabolize that xenobiotic in vivo. The sequence is that of Cytochrome P450 26B1 (CYP26B1) from Bos taurus (Bovine).